The sequence spans 216 residues: Redox-sensing transcriptional repressor Rex (216 aa).

A DNA-binding region (H-T-H motif) is located at residues 15 to 54 (KYLRVTQQLIEEGRDAVSSKELGDFTGINPVQVRRDLNAI). 89-94 (GAGNLG) lines the NAD(+) pocket.

Belongs to the transcriptional regulatory Rex family. Homodimer.

It is found in the cytoplasm. Functionally, modulates transcription in response to changes in cellular NADH/NAD(+) redox state. The protein is Redox-sensing transcriptional repressor Rex of Rubrobacter xylanophilus (strain DSM 9941 / JCM 11954 / NBRC 16129 / PRD-1).